The primary structure comprises 260 residues: Carbonic anhydrase 3 (260 aa).

N-acetylalanine is present on alanine 2. The Alpha-carbonic anhydrase domain maps to 3-259; sequence KEWGYADHNG…IKGRIVKASF (257 aa). A phosphoserine mark is found at serine 29, serine 43, serine 50, and serine 55. Residues 64–67 are involved in proton transfer; sequence KTCR. Residue threonine 73 is modified to Phosphothreonine. Zn(2+)-binding residues include histidine 94, histidine 96, and histidine 119. The residue at position 127 (tyrosine 127) is a Phosphotyrosine. The residue at position 176 (threonine 176) is a Phosphothreonine. An S-glutathionyl cysteine mark is found at cysteine 182 and cysteine 187. A substrate-binding site is contributed by 198 to 199; the sequence is TT. Phosphothreonine is present on threonine 216. Residue serine 219 is modified to Phosphoserine.

This sequence belongs to the alpha-carbonic anhydrase family. The cofactor is Zn(2+). In terms of processing, S-thiolated both by thiol-disulfide exchange with glutathione disulfide and by oxyradical-initiated S-thiolation with reduced glutathione. S-glutathionylated in hepatocytes under oxidative stress.

Its subcellular location is the cytoplasm. The enzyme catalyses hydrogencarbonate + H(+) = CO2 + H2O. Inhibited by acetazolamide. Functionally, reversible hydration of carbon dioxide. This chain is Carbonic anhydrase 3, found in Sus scrofa (Pig).